The chain runs to 799 residues: DNA ligase (799 aa).

Positions 1 to 11 are enriched in basic and acidic residues; it reads MTEVKTGRVVD. Residues 1–35 are disordered; the sequence is MTEVKTGRVVDDAPVNDAPENNAAEATSPARHDAI. NAD(+) contacts are provided by residues 67-71, 116-117, and Asp-147; these read DAEYD and SL. Lys-149 (N6-AMP-lysine intermediate) is an active-site residue. Positions 170, 207, 327, and 351 each coordinate NAD(+). Positions 445, 448, 463, and 468 each coordinate Zn(2+). Residues 634–723 enclose the BRCT domain; sequence AIVLPLQGLK…VASVDASEAV (90 aa). The interval 720 to 799 is disordered; that stretch reads SEAVAEETPP…RGRAEQLKLF (80 aa). The span at 755–767 shows a compositional bias: low complexity; that stretch reads GSASGDDSRGAAA. The span at 787–799 shows a compositional bias: basic and acidic residues; the sequence is DVPRGRAEQLKLF.

It belongs to the NAD-dependent DNA ligase family. LigA subfamily. It depends on Mg(2+) as a cofactor. The cofactor is Mn(2+).

The enzyme catalyses NAD(+) + (deoxyribonucleotide)n-3'-hydroxyl + 5'-phospho-(deoxyribonucleotide)m = (deoxyribonucleotide)n+m + AMP + beta-nicotinamide D-nucleotide.. DNA ligase that catalyzes the formation of phosphodiester linkages between 5'-phosphoryl and 3'-hydroxyl groups in double-stranded DNA using NAD as a coenzyme and as the energy source for the reaction. It is essential for DNA replication and repair of damaged DNA. The chain is DNA ligase from Nitratidesulfovibrio vulgaris (strain ATCC 29579 / DSM 644 / CCUG 34227 / NCIMB 8303 / VKM B-1760 / Hildenborough) (Desulfovibrio vulgaris).